A 340-amino-acid polypeptide reads, in one-letter code: MEWCCALSGLLPEEIQKVCAFAERFRGVQVFRWIAAGCTDFHAMSDLSSETRARLARACVISDTRVYTTLRDVDGTLKLGIELKDKRRVEAVLLVDQVSRKTACLSCQVGCPMACAFCQTGQLGFARNLSASEIVEQFLHLERCVGTLDNVVFMGMGEPMLNLDAVCRAIEILSHPQGRDLSEKRITISTSGHCRGIYSLADRALQVRLAVSLTTANAPLRARLMPRAAHDSLAKLKSAIRYFNEKSGKRVTLELALMRGVNTSERHAQEVIDFAHGLNVHVNLIPWNPVASIHFETPREVEVAHFEALLMRARIPVTRRYQRGNGIGGACGQLGKTAGV.

Glu90 functions as the Proton acceptor in the catalytic mechanism. In terms of domain architecture, Radical SAM core spans 97 to 325; it reads QVSRKTACLS…PVTRRYQRGN (229 aa). Residues Cys104 and Cys331 are joined by a disulfide bond. Positions 111, 115, and 118 each coordinate [4Fe-4S] cluster. Residues 157-158, Ser189, 212-214, and Asn288 contribute to the S-adenosyl-L-methionine site; these read GE and SLT. Cys331 functions as the S-methylcysteine intermediate in the catalytic mechanism.

Belongs to the radical SAM superfamily. RlmN family. The cofactor is [4Fe-4S] cluster.

Its subcellular location is the cytoplasm. The catalysed reaction is adenosine(2503) in 23S rRNA + 2 reduced [2Fe-2S]-[ferredoxin] + 2 S-adenosyl-L-methionine = 2-methyladenosine(2503) in 23S rRNA + 5'-deoxyadenosine + L-methionine + 2 oxidized [2Fe-2S]-[ferredoxin] + S-adenosyl-L-homocysteine. It carries out the reaction adenosine(37) in tRNA + 2 reduced [2Fe-2S]-[ferredoxin] + 2 S-adenosyl-L-methionine = 2-methyladenosine(37) in tRNA + 5'-deoxyadenosine + L-methionine + 2 oxidized [2Fe-2S]-[ferredoxin] + S-adenosyl-L-homocysteine. Specifically methylates position 2 of adenine 2503 in 23S rRNA and position 2 of adenine 37 in tRNAs. The polypeptide is Probable dual-specificity RNA methyltransferase RlmN (Treponema pallidum (strain Nichols)).